A 155-amino-acid chain; its full sequence is Protein SprT-like (155 aa).

Positions 7–145 (QQHMEEVSLQ…GSCGGRLKQT (139 aa)) constitute a SprT-like domain. His67 contributes to the Zn(2+) binding site. Glu68 is a catalytic residue. His71 is a binding site for Zn(2+).

Belongs to the SprT family. The cofactor is Zn(2+).

It localises to the cytoplasm. The polypeptide is Protein SprT-like (Listeria innocua serovar 6a (strain ATCC BAA-680 / CLIP 11262)).